We begin with the raw amino-acid sequence, 49 residues long: Large ribosomal subunit protein bL33 (49 aa).

Belongs to the bacterial ribosomal protein bL33 family.

This is Large ribosomal subunit protein bL33 from Nitratidesulfovibrio vulgaris (strain ATCC 29579 / DSM 644 / CCUG 34227 / NCIMB 8303 / VKM B-1760 / Hildenborough) (Desulfovibrio vulgaris).